We begin with the raw amino-acid sequence, 309 residues long: Ribonuclease Z (309 aa).

Residues His-63, His-65, Asp-67, His-68, His-145, Asp-216, and His-274 each coordinate Zn(2+). The active-site Proton acceptor is Asp-67.

It belongs to the RNase Z family. As to quaternary structure, homodimer. The cofactor is Zn(2+).

It carries out the reaction Endonucleolytic cleavage of RNA, removing extra 3' nucleotides from tRNA precursor, generating 3' termini of tRNAs. A 3'-hydroxy group is left at the tRNA terminus and a 5'-phosphoryl group is left at the trailer molecule.. Zinc phosphodiesterase, which displays some tRNA 3'-processing endonuclease activity. Probably involved in tRNA maturation, by removing a 3'-trailer from precursor tRNA. The polypeptide is Ribonuclease Z (Streptococcus suis (strain 98HAH33)).